Here is a 210-residue protein sequence, read N- to C-terminus: 3 beta-hydroxysteroid dehydrogenase/Delta 5--&gt;4-isomerase (210 aa).

The active-site Proton acceptor is the Y29. Position 33 (K33) interacts with NAD(+).

It belongs to the 3-beta-HSD family.

It catalyses the reaction a 3beta-hydroxy-Delta(5)-steroid + NAD(+) = a 3-oxo-Delta(5)-steroid + NADH + H(+). The catalysed reaction is a 3-oxo-Delta(5)-steroid = a 3-oxo-Delta(4)-steroid. The protein operates within lipid metabolism; steroid biosynthesis. Catalyzes the oxidative conversion of Delta(5)-ene-3-beta-hydroxy steroid, and the oxidative conversion of ketosteroids. The 3-beta-HSD enzymatic system plays a crucial role in the biosynthesis of all classes of hormonal steroids. During viral infection, steroid production contributes to virulence by inhibiting the host inflammatory response. The chain is 3 beta-hydroxysteroid dehydrogenase/Delta 5--&gt;4-isomerase (OPG174) from Variola virus (isolate Human/India/Ind3/1967) (VARV).